The sequence spans 322 residues: Tetraacyldisaccharide 4'-kinase (322 aa).

40-47 is an ATP binding site; the sequence is CVGGTGKT.

This sequence belongs to the LpxK family.

The enzyme catalyses a lipid A disaccharide + ATP = a lipid IVA + ADP + H(+). The protein operates within glycolipid biosynthesis; lipid IV(A) biosynthesis; lipid IV(A) from (3R)-3-hydroxytetradecanoyl-[acyl-carrier-protein] and UDP-N-acetyl-alpha-D-glucosamine: step 6/6. In terms of biological role, transfers the gamma-phosphate of ATP to the 4'-position of a tetraacyldisaccharide 1-phosphate intermediate (termed DS-1-P) to form tetraacyldisaccharide 1,4'-bis-phosphate (lipid IVA). The polypeptide is Tetraacyldisaccharide 4'-kinase (Koribacter versatilis (strain Ellin345)).